The chain runs to 686 residues: Band 4.1-like protein 4A (686 aa).

The FERM domain maps to 11–299 (FYCEVLLLDE…EHHTFFRMPE (289 aa)). The residue at position 304 (Ser304) is a Phosphoserine. The tract at residues 331–686 (RDLSIQLPRP…IQASRLKTET (356 aa)) is disordered. The segment covering 357–376 (AQTQPAESNSISRITANMEN) has biased composition (polar residues). Residues Ser389, Ser393, and Ser402 each carry the phosphoserine modification. Positions 418–428 (GPQSGLYNSPS) are enriched in polar residues. The segment covering 479–489 (RCNTSSGSESE) has biased composition (low complexity). Basic and acidic residues-rich tracts occupy residues 518 to 527 (VLRRQKEKNQ) and 547 to 561 (QAKEELWKHIQKELV). Basic residues predominate over residues 588 to 601 (IRHSHSPRSYRQYR). The span at 648-658 (GSKDSLMEEKP) shows a compositional bias: basic and acidic residues. The span at 673-686 (TIKTIQASRLKTET) shows a compositional bias: polar residues.

In terms of tissue distribution, expressed in many tissues. High levels of expression in brain, liver, thymus and peripheral blood leukocytes and low levels of expression in heart, kidney, testis and colon.

Its subcellular location is the cytoplasm. The protein resides in the cytoskeleton. This Homo sapiens (Human) protein is Band 4.1-like protein 4A.